Here is a 626-residue protein sequence, read N- to C-terminus: Pheromone B alpha 3 receptor (626 aa).

7 consecutive transmembrane segments (helical) span residues 8 to 28 (LFPTFAFLGFVLALVPLPWHL), 36 to 56 (CFFMVWTALGCLNQFVNSIVW), 70 to 90 (ISIRITMGLSVGLPASSLCII), 113 to 133 (IIIDALICVLFPLVYIAMQYI), 163 to 183 (IWPVLIGMVSATYSVLALIEF), 208 to 228 (LMALAMTEMCCTVPLGIFVIV), and 271 to 291 (ELTRWLAPVSAMLFFAYFGFA). 4 disordered regions span residues 363–409 (KQYT…SSPI), 481–509 (ATFTSANNDTDEPTSPALPDTPSSCSSSA), 524–549 (STTDVTRDTGSLPIRRSPAGPPRLPS), and 571–626 (QDVA…RASV). Over residues 376-391 (SSSGFSSSESTRFGSS) the composition is skewed to low complexity. A compositionally biased stretch (low complexity) spans 574-606 (ATGTAAPTTTAPAPASTTIAPATTTATAPTTTA).

This sequence belongs to the G-protein coupled receptor 4 family.

It is found in the membrane. Receptor for the BAP3 pheromone, a prenylated mating factor. This Schizophyllum commune (strain H4-8 / FGSC 9210) (Split gill fungus) protein is Pheromone B alpha 3 receptor (BAR3).